A 659-amino-acid chain; its full sequence is UvrABC system protein B (659 aa).

Residues 25-182 (QSIENGNRGQ…KKLIEIQYER (158 aa)) enclose the Helicase ATP-binding domain. 38–45 (GVTGSGKT) is a binding site for ATP. Positions 91–114 (YYDYYQPEAYVPQTDTFIEKDASI) match the Beta-hairpin motif. A Helicase C-terminal domain is found at 429-582 (QIDDLYGEIQ…QMEYNEEHNI (154 aa)). The region spanning 622-657 (EKLIEQYEEEMKEAAKNLQFERAAELRDIIKDLKEN) is the UVR domain.

The protein belongs to the UvrB family. As to quaternary structure, forms a heterotetramer with UvrA during the search for lesions. Interacts with UvrC in an incision complex.

It is found in the cytoplasm. In terms of biological role, the UvrABC repair system catalyzes the recognition and processing of DNA lesions. A damage recognition complex composed of 2 UvrA and 2 UvrB subunits scans DNA for abnormalities. Upon binding of the UvrA(2)B(2) complex to a putative damaged site, the DNA wraps around one UvrB monomer. DNA wrap is dependent on ATP binding by UvrB and probably causes local melting of the DNA helix, facilitating insertion of UvrB beta-hairpin between the DNA strands. Then UvrB probes one DNA strand for the presence of a lesion. If a lesion is found the UvrA subunits dissociate and the UvrB-DNA preincision complex is formed. This complex is subsequently bound by UvrC and the second UvrB is released. If no lesion is found, the DNA wraps around the other UvrB subunit that will check the other stand for damage. This chain is UvrABC system protein B, found in Clostridium perfringens (strain ATCC 13124 / DSM 756 / JCM 1290 / NCIMB 6125 / NCTC 8237 / Type A).